A 397-amino-acid polypeptide reads, in one-letter code: DnaJ protein homolog 1 (397 aa).

One can recognise a J domain in the interval 1-52 (KNASPDDLKKAYRKAAIKNHPDKGGDPEKFKELAQAYDVLSDPEKREIYDQY). The CR-type zinc-finger motif lies at 114–198 (GTSKKLSLSR…CKGEKVVQEK (85 aa)). 4 CXXCXGXG motif repeats span residues 127 to 134 (CSKCNGKG), 143 to 150 (CASCQGSG), 170 to 177 (CNDCKGTG), and 186 to 193 (CPLCKGEK). The disordered stretch occupies residues 367 to 397 (MRRKQHQHAQEAYDEDDEGHGGGQRVQCAQQ). Cys394 is subject to Cysteine methyl ester. A lipid anchor (S-farnesyl cysteine) is attached at Cys394. The propeptide at 395 to 397 (AQQ) is removed in mature form.

The protein resides in the membrane. Plays a continuous role in plant development probably in the structural organization of compartments. The polypeptide is DnaJ protein homolog 1 (DNAJ1) (Allium porrum (Leek)).